The sequence spans 525 residues: GMP synthase [glutamine-hydrolyzing] (525 aa).

A Glutamine amidotransferase type-1 domain is found at 9–207 (RILILDFGSQ…VHEICGCPAD (199 aa)). Cys-86 acts as the Nucleophile in catalysis. Residues His-181 and Glu-183 contribute to the active site. The region spanning 208–400 (WTPGNIVDDL…LGLPADMVYR (193 aa)) is the GMPS ATP-PPase domain. ATP is bound at residue 235–241 (SGGVDSS).

Homodimer.

It catalyses the reaction XMP + L-glutamine + ATP + H2O = GMP + L-glutamate + AMP + diphosphate + 2 H(+). Its pathway is purine metabolism; GMP biosynthesis; GMP from XMP (L-Gln route): step 1/1. Its function is as follows. Catalyzes the synthesis of GMP from XMP. This is GMP synthase [glutamine-hydrolyzing] from Alkalilimnicola ehrlichii (strain ATCC BAA-1101 / DSM 17681 / MLHE-1).